Here is a 471-residue protein sequence, read N- to C-terminus: Fructokinase-like 1, chloroplastic (471 aa).

The transit peptide at 1–38 (MASLLIFPHLHHFDSSLDRREVLVVRHSQASRRFLTPK) directs the protein to the chloroplast. Residues 36-85 (TPKASINGSGITNGAAAETTSKPSRKGRKKKQTSTVIEKDNTETDPELNP) form a disordered region. Positions 39–57 (ASINGSGITNGAAAETTSK) are enriched in polar residues. Over residues 58–67 (PSRKGRKKKQ) the composition is skewed to basic residues.

Belongs to the carbohydrate kinase PfkB family. As to quaternary structure, interacts with CITRX/TRXz. Interacts with PTAC7. Self-interacts. Binds to FLN2. Associates with the plastid-encoded RNA polymerase (PEP) complex.

Its subcellular location is the plastid. It localises to the chloroplast. Functionally, required for proper chloroplast development, most likely through regulating plastid-encoded polymerase (PEP) dependent chloroplast transcription. Acts as a component of the transcriptionally active plastid chromosome that is required for plastid gene expression. The polypeptide is Fructokinase-like 1, chloroplastic (Arabidopsis thaliana (Mouse-ear cress)).